Consider the following 199-residue polypeptide: NAD(P)H dehydrogenase (quinone) (199 aa).

Residues 4-190 (MLVLYYSAYG…DGARFQGRRV (187 aa)) enclose the Flavodoxin-like domain. Residues 10–15 (SAYGYM) and 78–80 (TRY) contribute to the FMN site. Y12 lines the NAD(+) pocket. Substrate is bound at residue W98. FMN is bound by residues 113-119 (STATQHG) and H134. The segment at 157–181 (GGAPYGMTTTADGDGSRQPSAQELD) is disordered. Over residues 163 to 177 (MTTTADGDGSRQPSA) the composition is skewed to polar residues.

It belongs to the WrbA family. It depends on FMN as a cofactor.

It catalyses the reaction a quinone + NADH + H(+) = a quinol + NAD(+). The catalysed reaction is a quinone + NADPH + H(+) = a quinol + NADP(+). The protein is NAD(P)H dehydrogenase (quinone) of Brucella melitensis biotype 2 (strain ATCC 23457).